Here is a 205-residue protein sequence, read N- to C-terminus: Large ribosomal subunit protein bL9 (205 aa).

Positions 160–205 (RDRKSRNAAAASEVQDAPVEDGGDEVVSVDSVAAEDGGADASGGTA) are disordered. Low complexity predominate over residues 184-195 (EVVSVDSVAAED).

Belongs to the bacterial ribosomal protein bL9 family.

Functionally, binds to the 23S rRNA. The protein is Large ribosomal subunit protein bL9 of Anaplasma phagocytophilum (strain HZ).